A 349-amino-acid chain; its full sequence is Trans-enoyl reductase phmE (349 aa).

C55–K58 contributes to the NADP(+) binding site. T143–L150 is a binding site for substrate. NADP(+) is bound by residues S182–N185, Y200, and L247–E248. G267–L271 is a binding site for substrate. Residue V336–S337 coordinates NADP(+).

It belongs to the zinc-containing alcohol dehydrogenase family. Monomer.

It participates in mycotoxin biosynthesis. Functionally, trans-enoyl reductase; part of the gene cluster that mediates the biosynthesis of the mycotoxins phomacins, leucine-derived cytochalasans with potent actin polymerization-inhibitory activities and monocot-specific antigerminative activities. The first step in the pathway is catalyzed by the hybrid PKS-NRPS phmA, assisted by the enoyl reductase phmE, that are responsible for fusion of the leucine precursor and the polyketide backbone to produce a 2-pyrrolidone intermediate. The polyketide synthase module (PKS) of phmA is responsible for the synthesis of the polyketide backbone and the downstream nonribosomal peptide synthetase (NRPS) amidates the carboxyl end of the polyketide with the leucine precursor. Because phmA lacks a designated enoylreductase (ER) domain, the required activity is provided the enoyl reductase phmE. Reduction by the hydrolyase phmG, followed by dehydration and intra-molecular Diels-Alder cyclization by the Diels-Alderase phmD then yield the required isoindolone-fused macrocycle. A number of oxidative steps catalyzed by the tailoring cytochrome P450 monooxygenase phmB, the FAD-linked oxidoreductase phmC and the short-chain dehydrogenase/reductase phmF, are further required to afford the final products, phomacin D and phomacin E. The sequence is that of Trans-enoyl reductase phmE from Phaeosphaeria nodorum (strain SN15 / ATCC MYA-4574 / FGSC 10173) (Glume blotch fungus).